The following is a 387-amino-acid chain: Alkanesulfonate monooxygenase (387 aa).

This sequence belongs to the SsuD family.

It catalyses the reaction an alkanesulfonate + FMNH2 + O2 = an aldehyde + FMN + sulfite + H2O + 2 H(+). Catalyzes the desulfonation of aliphatic sulfonates. This is Alkanesulfonate monooxygenase from Cupriavidus metallidurans (strain ATCC 43123 / DSM 2839 / NBRC 102507 / CH34) (Ralstonia metallidurans).